The sequence spans 109 residues: Nucleoid-associated protein BUsg_467 (109 aa).

Belongs to the YbaB/EbfC family. As to quaternary structure, homodimer.

It is found in the cytoplasm. The protein localises to the nucleoid. Functionally, binds to DNA and alters its conformation. May be involved in regulation of gene expression, nucleoid organization and DNA protection. In Buchnera aphidicola subsp. Schizaphis graminum (strain Sg), this protein is Nucleoid-associated protein BUsg_467.